The chain runs to 445 residues: Nuclear envelope integral membrane protein 1 (445 aa).

An N-terminal signal peptide occupies residues 1–44 (MAGGMKVAVLPAVGAGPWSWGAGGCGAVRLLLVLFGCFVCGSAG). The N-linked (GlcNAc...) asparagine glycan is linked to Asn-125. Transmembrane regions (helical) follow at residues 161–181 (PKLF…DLLS), 186–206 (FYYS…IIFI), 216–236 (PIYI…QLVF), 245–265 (CYWQ…FAVC), and 289–309 (LCFM…VVIA). Positions 186 to 297 (FYYSTGMSVG…GLCFMYSSIQ (112 aa)) are a; required for its colocalization with lamins at the nuclear envelope. Positions 336–405 (TVPPRLLTEE…LTPNEVSVHE (70 aa)) are b; required for interaction with RAN-GTP. A required for nuclear localization region spans residues 336–445 (TVPPRLLTEE…LVVQQNSFLT (110 aa)). Residues Ser-368, Ser-424, and Ser-425 each carry the phosphoserine modification. The span at 418–430 (ELSEETSSEEEDS) shows a compositional bias: acidic residues. The tract at residues 418–445 (ELSEETSSEEEDSDSRYPLVVQQNSFLT) is disordered.

This sequence belongs to the NEMP family. In terms of assembly, homooligomer. Interacts with RAN-GTP. Interacts with EMD. Phosphorylation may regulate its interaction with RAN-GTP.

The protein localises to the nucleus inner membrane. It localises to the nucleus envelope. Its function is as follows. Together with EMD, contributes to nuclear envelope stiffness in germ cells. Required for female fertility. Essential for normal erythropoiesis. Required for efficient nuclear envelope opening and enucleation during the late stages of erythroblast maturation. This chain is Nuclear envelope integral membrane protein 1 (NEMP1), found in Bos taurus (Bovine).